The chain runs to 582 residues: Putative phospholipase B-like 2 (582 aa).

The N-terminal stretch at 1 to 42 (MTRLIRSKKQFLIRSLHSVFYYLGSLLHSTFEMNVFIGLLLA) is a signal peptide. 5 N-linked (GlcNAc...) asparagine glycosylation sites follow: asparagine 91, asparagine 141, asparagine 178, asparagine 224, and asparagine 318. An intrachain disulfide couples cysteine 139 to cysteine 146. A disulfide bond links cysteine 480 and cysteine 482. The N-linked (GlcNAc...) asparagine glycan is linked to asparagine 502.

This sequence belongs to the phospholipase B-like family.

The protein resides in the secreted. In terms of biological role, putative phospholipase. In Caenorhabditis elegans, this protein is Putative phospholipase B-like 2.